Here is a 376-residue protein sequence, read N- to C-terminus: UDP-N-acetylglucosamine--N-acetylmuramyl-(pentapeptide) pyrophosphoryl-undecaprenol N-acetylglucosamine transferase (376 aa).

UDP-N-acetyl-alpha-D-glucosamine contacts are provided by residues 11-13 (TGG), N117, R160, S208, and Q310.

The protein belongs to the glycosyltransferase 28 family. MurG subfamily.

It is found in the cell inner membrane. It catalyses the reaction di-trans,octa-cis-undecaprenyl diphospho-N-acetyl-alpha-D-muramoyl-L-alanyl-D-glutamyl-meso-2,6-diaminopimeloyl-D-alanyl-D-alanine + UDP-N-acetyl-alpha-D-glucosamine = di-trans,octa-cis-undecaprenyl diphospho-[N-acetyl-alpha-D-glucosaminyl-(1-&gt;4)]-N-acetyl-alpha-D-muramoyl-L-alanyl-D-glutamyl-meso-2,6-diaminopimeloyl-D-alanyl-D-alanine + UDP + H(+). The protein operates within cell wall biogenesis; peptidoglycan biosynthesis. Functionally, cell wall formation. Catalyzes the transfer of a GlcNAc subunit on undecaprenyl-pyrophosphoryl-MurNAc-pentapeptide (lipid intermediate I) to form undecaprenyl-pyrophosphoryl-MurNAc-(pentapeptide)GlcNAc (lipid intermediate II). This chain is UDP-N-acetylglucosamine--N-acetylmuramyl-(pentapeptide) pyrophosphoryl-undecaprenol N-acetylglucosamine transferase, found in Rickettsia peacockii (strain Rustic).